Reading from the N-terminus, the 422-residue chain is G2/mitotic-specific cyclin-A (422 aa).

Positions 1–29 (MSQPFALHHDGENQMQRRGKMNTRSNGLS) are disordered.

Belongs to the cyclin family. Cyclin AB subfamily.

Essential for the control of the cell cycle at the G2/M (mitosis) transition. Interacts with the CDC2 and CDK2 protein kinases to form MPF. G2/M cyclins accumulate steadily during G2 and are abruptly destroyed at mitosis. The protein is G2/mitotic-specific cyclin-A of Spisula solidissima (Atlantic surf-clam).